Reading from the N-terminus, the 355-residue chain is Guanine nucleotide-binding protein G(i) subunit alpha-2 (355 aa).

The N-myristoyl glycine moiety is linked to residue Gly-2. A lipid anchor (S-palmitoyl cysteine) is attached at Cys-3. Positions 32-355 (REVKLLLLGA…KNNLKDCGLF (324 aa)) constitute a G-alpha domain. Residues 35–48 (KLLLLGAGESGKST) are G1 motif. Residues 40-47 (GAGESGKS), 176-182 (LRTRVKT), 201-205 (DVGGQ), 270-273 (NKKD), and Ala-327 contribute to the GTP site. The Mg(2+) site is built by Ser-47 and Thr-182. The segment at 174 to 182 (DVLRTRVKT) is G2 motif. Positions 197 to 206 (FKMFDVGGQR) are G3 motif. The interval 266–273 (ILFLNKKD) is G4 motif. The interval 325-330 (TCATDT) is G5 motif.

This sequence belongs to the G-alpha family. G(i/o/t/z) subfamily. As to quaternary structure, g proteins are composed of 3 units; alpha, beta and gamma. The alpha chain contains the guanine nucleotide binding site.

Its subcellular location is the cytoplasm. It is found in the cytoskeleton. The protein localises to the microtubule organizing center. The protein resides in the centrosome. It localises to the cell membrane. Functionally, guanine nucleotide-binding proteins (G proteins) are involved as modulators or transducers in various transmembrane signaling systems. The G(i) proteins are involved in hormonal regulation of adenylate cyclase: they inhibit the cyclase in response to beta-adrenergic stimuli. May play a role in cell division. The sequence is that of Guanine nucleotide-binding protein G(i) subunit alpha-2 (gnai2) from Oryzias latipes (Japanese rice fish).